The primary structure comprises 304 residues: Xylanase inhibitor protein 1 (304 aa).

The N-terminal stretch at 1–30 is a signal peptide; the sequence is MAPLAARRPACLLALLSVAAALFLTPTALA. Positions 36 to 304 constitute a GH18 domain; the sequence is GQVTVFWGRN…NYSSLIKYYA (269 aa). Cys-55 and Cys-96 form a disulfide bridge. Asn-119 carries N-linked (GlcNAc...) asparagine glycosylation. The active-site Proton donor is Glu-158. The segment at 178–184 is interaction with fungal GH11 xylanase; the sequence is IRGGPGK. Residues Cys-194 and Cys-225 are joined by a disulfide bond. The interaction with fungal GH10 xylanase stretch occupies residues 262-275; that stretch reads HPKNVYYGVAPVAQ. An N-linked (GlcNAc...) asparagine glycan is attached at Asn-295.

It belongs to the glycosyl hydrolase 18 family. Xylanase inhibitor subfamily. As to quaternary structure, binds to fungal GH10 and GH11 xylanases. Also forms a ternary complex with barley alpha-amylase 1 (AMY1) and insoluble starch.

It localises to the secreted. In terms of biological role, fungal xylanase inhibitor. Possesses competitive inhibiting activity against fungal endo-1,4-beta-D-xylanases belonging to glycoside hydrolase family 10 (GH10) and family 11 (GH11). Possesses also inhibitory activity towards barley alpha-amylases. Binding to xylanases or amylases is necessary for inhibition activity. May function in plant defense against secreted fungal pathogen xylanases. Is similar to class III chitinases, but does not exhibit chitinase activity. The chain is Xylanase inhibitor protein 1 from Triticum aestivum (Wheat).